The chain runs to 159 residues: Neuroglobin (159 aa).

One can recognise a Globin domain in the interval 3 to 151 (KLSEKDKELI…VVAAMSQGWA (149 aa)). Residues His-66 and His-98 each coordinate heme b.

The protein belongs to the globin family. Monomer. Homodimers and homotetramers. Mainly monomeric but also detected as part of homodimers and homotetramers.

It is found in the cytoplasm. It localises to the cytosol. The protein localises to the mitochondrion matrix. The enzyme catalyses Fe(III)-heme b-[protein] + nitric oxide + H2O = Fe(II)-heme b-[protein] + nitrite + 2 H(+). In terms of biological role, monomeric globin with a bis-histidyl six-coordinate heme-iron atom through which it can bind dioxygen, carbon monoxide and nitric oxide. Could help transport oxygen and increase its availability to the metabolically active neuronal tissues, though its low quantity in tissues as well as its high affinity for dioxygen, which may limit its oxygen-releasing ability, argue against it. The ferrous/deoxygenated form exhibits a nitrite reductase activity and it could produce nitric oxide which in turn inhibits cellular respiration in response to hypoxia. In its ferrous/deoxygenated state, it may also exhibit GDI (Guanine nucleotide Dissociation Inhibitor) activity toward heterotrimeric G-alpha proteins, thereby regulating signal transduction to facilitate neuroprotective responses in the wake of hypoxia and associated oxidative stress. This is Neuroglobin (ngb) from Chaenocephalus aceratus (Blackfin icefish).